A 103-amino-acid polypeptide reads, in one-letter code: Small ribosomal subunit protein uS10 (103 aa).

It belongs to the universal ribosomal protein uS10 family. In terms of assembly, part of the 30S ribosomal subunit.

Involved in the binding of tRNA to the ribosomes. This Neisseria gonorrhoeae protein is Small ribosomal subunit protein uS10.